Consider the following 962-residue polypeptide: Nonribosomal peptide synthetase atqA (962 aa).

Residues 34–462 (AANTTEGIIA…DGRTKEMVNI (429 aa)) are adenylation (A) domain. The 78-residue stretch at 595-672 (SAEEATILSI…GLCQRIAATS (78 aa)) folds into the Carrier domain. The residue at position 630 (Ser630) is an O-(pantetheine 4'-phosphoryl)serine. Residues 694–951 (PLWLVHPGVG…KPEYVANFAK (258 aa)) are thioesterase (TE) domain.

This sequence belongs to the NRP synthetase family.

It functions in the pathway secondary metabolite biosynthesis. Its function is as follows. Nonribosomal peptide synthetase; part of the gene cluster that mediates the biosynthesis of asterriquinone CT5, a natural product that displays potential biological activities including antitumor and insulin mimic activities. The nonribosomal peptide synthetase atqA is responsible for the production of the benzoquinone derivative didemethylasterriquinone D (DDAQ D), via condensation of 2 indole pyruvic acid (IPA) molecules. The symmetric connectivity of the 2 IPA molecules is thought to arise by head-to-tail dual Claisen condensations catalyzed by the TE domain of atqA. DDAQ D represents the core structure of asterriquinones and is further modified by yet unidentified tailoring enzymes to lead to the production of asterriquinone CT5. The protein is Nonribosomal peptide synthetase atqA of Aspergillus terreus (strain NIH 2624 / FGSC A1156).